The following is a 765-amino-acid chain: Polyadenylate-binding protein, cytoplasmic and nuclear (765 aa).

Positions methionine 1–serine 37 are enriched in low complexity. Positions methionine 1 to alanine 49 are disordered. The span at threonine 38–serine 48 shows a compositional bias: polar residues. 4 consecutive RRM domains span residues alanine 49–arginine 127, glycine 137–serine 214, threonine 230–lysine 307, and valine 333–arginine 470. Disordered regions lie at residues valine 364–lysine 427 and proline 619–alanine 657. Residues glutamate 377–lysine 427 are compositionally biased toward basic and acidic residues. Over residues valine 628 to proline 637 the composition is skewed to low complexity. Residues alanine 659–lysine 736 enclose the PABC domain. Residues asparagine 737–serine 765 are disordered. Basic and acidic residues predominate over residues alanine 749–serine 765.

It belongs to the polyadenylate-binding protein type-1 family.

The protein resides in the cytoplasm. It localises to the nucleus. Functionally, binds the poly(A) tail of mRNA. Appears to be an important mediator of the multiple roles of the poly(A) tail in mRNA biogenesis, stability and translation. In the nucleus, involved in both mRNA cleavage and polyadenylation. Is also required for efficient mRNA export to the cytoplasm. Acts in concert with a poly(A)-specific nuclease (PAN) to affect poly(A) tail shortening, which may occur concomitantly with either nucleocytoplasmic mRNA transport or translational initiation. In the cytoplasm, stimulates translation initiation and regulates mRNA decay through translation termination-coupled poly(A) shortening, probably mediated by PAN. The polypeptide is Polyadenylate-binding protein, cytoplasmic and nuclear (pab1) (Aspergillus oryzae (strain ATCC 42149 / RIB 40) (Yellow koji mold)).